A 457-amino-acid polypeptide reads, in one-letter code: Multidrug resistance protein MdtK (457 aa).

The next 12 membrane-spanning stretches (helical) occupy residues 11-31 (LLALAIPVILAQIAQTAMGFV), 53-73 (IWLPAILFGHGLLLALTPVIA), 93-113 (WLAGFVSVLIMLVLWNAGYII), 127-147 (AVGYLRALLWGAPGYLFFQVA), 160-180 (GMVMGFIGLLVNIPVNYIFIY), 189-209 (GGVGCGVATAAVYWVMFLAMV), 243-263 (LPIALALFFEVTLFAVVALLV), 276-296 (IALNFSSLMFVLPMSLAAAVT), 314-334 (AARTGLMVGVCMATLTAIFTV), 350-370 (VVTLAAHLMLLAAVYQISDSI), 387-407 (IFYITFTAYWVLGLPSGYILA), and 418-438 (PAGFWIGFIIGLTSAAIMMML).

Belongs to the multi antimicrobial extrusion (MATE) (TC 2.A.66.1) family. MdtK subfamily.

It localises to the cell inner membrane. In terms of biological role, multidrug efflux pump that functions probably as a Na(+)/drug antiporter. This is Multidrug resistance protein MdtK from Escherichia coli O45:K1 (strain S88 / ExPEC).